A 221-amino-acid polypeptide reads, in one-letter code: Pyridoxine/pyridoxamine 5'-phosphate oxidase (221 aa).

The disordered stretch occupies residues 1–21 (MDYSDPAELRESYDGAPLDPR). Residues 10 to 13 (RESY) and Lys68 each bind substrate. Residues 63-68 (RTVLLK), 78-79 (FT), Arg84, Lys85, and Gln107 contribute to the FMN site. Positions 125, 129, and 133 each coordinate substrate. Residues 143–144 (QS) and Trp189 each bind FMN. A substrate-binding site is contributed by 195 to 197 (RMH). FMN is bound at residue Arg199.

The protein belongs to the pyridoxamine 5'-phosphate oxidase family. As to quaternary structure, homodimer. Requires FMN as cofactor.

It carries out the reaction pyridoxamine 5'-phosphate + O2 + H2O = pyridoxal 5'-phosphate + H2O2 + NH4(+). The catalysed reaction is pyridoxine 5'-phosphate + O2 = pyridoxal 5'-phosphate + H2O2. It functions in the pathway cofactor metabolism; pyridoxal 5'-phosphate salvage; pyridoxal 5'-phosphate from pyridoxamine 5'-phosphate: step 1/1. It participates in cofactor metabolism; pyridoxal 5'-phosphate salvage; pyridoxal 5'-phosphate from pyridoxine 5'-phosphate: step 1/1. Catalyzes the oxidation of either pyridoxine 5'-phosphate (PNP) or pyridoxamine 5'-phosphate (PMP) into pyridoxal 5'-phosphate (PLP). The polypeptide is Pyridoxine/pyridoxamine 5'-phosphate oxidase (Thermobifida fusca (strain YX)).